Here is a 157-residue protein sequence, read N- to C-terminus: Polyferredoxin protein VhcB (157 aa).

4Fe-4S ferredoxin-type domains lie at 23-52, 62-92, and 100-129; these read NGIS…VVNP, KTER…MGKI, and DRIE…LNEE. The [4Fe-4S] cluster site is built by Cys-32, Cys-35, Cys-38, Cys-42, Cys-72, Cys-75, Cys-78, Cys-82, Cys-109, Cys-112, Cys-115, Cys-119, Cys-136, Cys-139, Cys-142, and Cys-146.

It depends on [4Fe-4S] cluster as a cofactor.

The chain is Polyferredoxin protein VhcB (vhcB) from Methanococcus voltae.